We begin with the raw amino-acid sequence, 7214 residues long: Nonribosomal peptide synthetase atnA (7214 aa).

Positions 257–651 (ERKALEQPHA…VGRKDTQVKI (395 aa)) are adenylation 1. A Carrier 1 domain is found at 786–862 (EPVTETEKAV…AMSQIAVELS (77 aa)). O-(pantetheine 4'-phosphoryl)serine is present on Ser-823. The segment at 899-1318 (EDAYPATALQ…LVSQKDYTQI (420 aa)) is condensation 1. Residues 1340 to 1735 (QVLATPDAPA…ARKDTQAKVR (396 aa)) form an adenylation 2 region. Positions 1877–1953 (QPTSDIEKKV…ALAGRAQYIE (77 aa)) constitute a Carrier 2 domain. At Ser-1914 the chain carries O-(pantetheine 4'-phosphoryl)serine. Positions 1962-2384 (PEAEVIDEWF…RQVLETGIDE (423 aa)) are epimerization. The condensation 2 stretch occupies residues 2431–2845 (SPCSPMQLGL…MLSPLDRASL (415 aa)). The interval 2866 to 3262 (QNARKRPHAL…VGRKDTQVKV (397 aa)) is adenylation 3. Positions 3398–3472 (ALETPMEETI…DMARIVVAAY (75 aa)) constitute a Carrier 3 domain. Residue Ser-3433 is modified to O-(pantetheine 4'-phosphoryl)serine. Residues 3510–3904 (VEDVYPSTSL…QLCENEDGRL (395 aa)) are condensation 3. An adenylation 4 region spans residues 3943-4339 (ERARLHPDLL…VGRKDSQVKL (397 aa)). Residues 4476 to 4552 (VPGSEAEKVI…ELAGRVTSIS (77 aa)) form the Carrier 4 domain. Position 4513 is an O-(pantetheine 4'-phosphoryl)serine (Ser-4513). The interval 4601 to 5033 (VEDVYPCSPL…TSAAMRAQLL (433 aa)) is condensation 4. The tract at residues 5051–5446 (FHRTALRYPE…VGRKDTQIKF (396 aa)) is adenylation 5. A disordered region spans residues 5489 to 5515 (FITTEGGSGHENKGSPSLKGSSGDPVS). In terms of domain architecture, Carrier 5 spans 5591–5667 (APRTAMEKRL…QMANIVARNA (77 aa)). O-(pantetheine 4'-phosphoryl)serine is present on Ser-5628. The segment at 5707 to 6123 (QDVYPCTPLQ…HLLGDNEIKM (417 aa)) is condensation 5. The tract at residues 6145 to 6543 (ERAVLQPEAI…GRKDTQIKLR (399 aa)) is adenylation 6. The region spanning 6683-6766 (DPADKLALAL…DVARMIEHGN (84 aa)) is the Carrier 6 domain. Ser-6725 is modified (O-(pantetheine 4'-phosphoryl)serine). The interval 6814 to 7194 (ILLTGATGFL…KSISYMRQIG (381 aa)) is thioesterase (TE) domain. The segment at 6895 to 6915 (STVEGRDHPGSESGSTAGPAE) is disordered.

The protein belongs to the NRP synthetase family.

It participates in secondary metabolite biosynthesis. Nonribosomal peptide synthetase; part of the gene cluster that mediates the biosynthesis of aspercryptins, linear lipopeptides built from six amino acids including 2 highly unusual and nonproteogenic amino acids, 2-amino-octanoic acid (2aoa) and 2-amino-dodecanol (2adol). The core structure of aspercryptins is as follows: Ser/Ala-Thr-Ile/Val-2aoa-Asn-2adol. The first step of aspercryptin biosynthesis is the generation of the fatty acid precursors, octanoic and dodecanoic acids, by the FAS subunits atnF and atnM. The fatty acid precursors are likely transformed into the corresponding alpha-amino fatty acids in three steps. First, they are hydroxylated by the cytochrome P450 monooxygenase atnE, then oxidized to the corresponding alpha-keto acids by the NAD(P)-dependent oxidoreductase atnD, and finally converted to the alpha-amino fatty acids by the PLP-dependent aminotransferases atnH or atnJ. the alpha-amino fatty acids, 2-amino-octanoic and 2-amino-dodecanoic acids, are recognized, activated, and covalently tethered to the NRPS atnA by its fourth and sixth adenylation domains. The second module of atnA is the Thr module and contains an epimerase (E) domain responsible for the epimerization of Thr to D-allo-Thr. Additionally, despite atnA having only one epimerase domain, the first amino acid of aspercryptin A1 is D-Ser, suggesting that serine is either loaded directly as D-Ser on the first module or that the epimerase domain in the threonine module epimerizes both L-Ser and L-Thr. After condensation of the hexapeptide of aspercryptin, the C-terminal reductase (TE) domain might be involved in the reductive release and production of the aldehyde hexapeptide. Further reduction would generate aspercryptins. The variety of aspercryptins produced reflects the flexibility of the atnA NRPS, allowing incorporation of alanine instead of serine, valine for isoleucine, and a C10 fatty amino alcohol instead of the C12 version. AtnB seems to be involved in the selectivity for Ile versus Val by the third module. Moreover, type B, C and D aspercryptins have an additional N-terminal cichorine, acetyl and propionyl group respectively. The chain is Nonribosomal peptide synthetase atnA from Emericella nidulans (strain FGSC A4 / ATCC 38163 / CBS 112.46 / NRRL 194 / M139) (Aspergillus nidulans).